Here is a 512-residue protein sequence, read N- to C-terminus: Glutamyl-tRNA(Gln) amidotransferase subunit A (512 aa).

Residues Lys-82 and Ser-157 each act as charge relay system in the active site. The active-site Acyl-ester intermediate is Ser-181.

This sequence belongs to the amidase family. GatA subfamily. Heterotrimer of A, B and C subunits.

The catalysed reaction is L-glutamyl-tRNA(Gln) + L-glutamine + ATP + H2O = L-glutaminyl-tRNA(Gln) + L-glutamate + ADP + phosphate + H(+). Its function is as follows. Allows the formation of correctly charged Gln-tRNA(Gln) through the transamidation of misacylated Glu-tRNA(Gln) in organisms which lack glutaminyl-tRNA synthetase. The reaction takes place in the presence of glutamine and ATP through an activated gamma-phospho-Glu-tRNA(Gln). The polypeptide is Glutamyl-tRNA(Gln) amidotransferase subunit A (Bordetella pertussis (strain Tohama I / ATCC BAA-589 / NCTC 13251)).